Here is a 309-residue protein sequence, read N- to C-terminus: Sulfate adenylyltransferase subunit 2 (309 aa).

The protein belongs to the PAPS reductase family. CysD subfamily. In terms of assembly, heterodimer composed of CysD, the smaller subunit, and CysN.

It carries out the reaction sulfate + ATP + H(+) = adenosine 5'-phosphosulfate + diphosphate. It participates in sulfur metabolism; hydrogen sulfide biosynthesis; sulfite from sulfate: step 1/3. Its function is as follows. With CysN forms the ATP sulfurylase (ATPS) that catalyzes the adenylation of sulfate producing adenosine 5'-phosphosulfate (APS) and diphosphate, the first enzymatic step in sulfur assimilation pathway. APS synthesis involves the formation of a high-energy phosphoric-sulfuric acid anhydride bond driven by GTP hydrolysis by CysN coupled to ATP hydrolysis by CysD. The sequence is that of Sulfate adenylyltransferase subunit 2 from Mycobacterium sp. (strain KMS).